The primary structure comprises 715 residues: Polyphosphate kinase (715 aa).

ATP is bound at residue N60. Residues R380 and R410 each coordinate Mg(2+). H440 (phosphohistidine intermediate) is an active-site residue. Residues Y473, R569, and H597 each contribute to the ATP site.

Belongs to the polyphosphate kinase 1 (PPK1) family. Mg(2+) is required as a cofactor. Post-translationally, an intermediate of this reaction is the autophosphorylated ppk in which a phosphate is covalently linked to a histidine residue through a N-P bond.

It catalyses the reaction [phosphate](n) + ATP = [phosphate](n+1) + ADP. Its function is as follows. Catalyzes the reversible transfer of the terminal phosphate of ATP to form a long-chain polyphosphate (polyP). The protein is Polyphosphate kinase of Erythrobacter litoralis (strain HTCC2594).